Consider the following 108-residue polypeptide: Ig kappa chain V-V region EPC 109 (108 aa).

The interval 1–23 (DVQMIQSPSSLSASLGDIVTMTC) is framework-1. A disulfide bond links C23 and C88. The segment at 24–34 (QASQGTNINLN) is complementarity-determining-1. Positions 35–49 (WFQQKPGKAPKLLIY) are framework-2. Residues 50–56 (GASILEA) are complementarity-determining-2. Residues 57–88 (GVPSRFSGRRYGTDFTLTISSLEDEDMATYFC) form a framework-3 region. The interval 89–97 (LQHSYLPYT) is complementarity-determining-3. Residues 98–108 (FGGGTKLEKKR) form a framework-4 region.

The protein is Ig kappa chain V-V region EPC 109 of Mus musculus (Mouse).